The primary structure comprises 172 residues: Large ribosomal subunit protein uL10 (172 aa).

The protein belongs to the universal ribosomal protein uL10 family. In terms of assembly, part of the ribosomal stalk of the 50S ribosomal subunit. The N-terminus interacts with L11 and the large rRNA to form the base of the stalk. The C-terminus forms an elongated spine to which L12 dimers bind in a sequential fashion forming a multimeric L10(L12)X complex.

Forms part of the ribosomal stalk, playing a central role in the interaction of the ribosome with GTP-bound translation factors. The sequence is that of Large ribosomal subunit protein uL10 from Xanthobacter autotrophicus (strain ATCC BAA-1158 / Py2).